We begin with the raw amino-acid sequence, 366 residues long: Histidinol-phosphate aminotransferase (366 aa).

An N6-(pyridoxal phosphate)lysine modification is found at K231.

The protein belongs to the class-II pyridoxal-phosphate-dependent aminotransferase family. Histidinol-phosphate aminotransferase subfamily. It depends on pyridoxal 5'-phosphate as a cofactor.

It carries out the reaction L-histidinol phosphate + 2-oxoglutarate = 3-(imidazol-4-yl)-2-oxopropyl phosphate + L-glutamate. It functions in the pathway amino-acid biosynthesis; L-histidine biosynthesis; L-histidine from 5-phospho-alpha-D-ribose 1-diphosphate: step 7/9. This Halobacterium salinarum (strain ATCC 29341 / DSM 671 / R1) protein is Histidinol-phosphate aminotransferase.